Here is a 293-residue protein sequence, read N- to C-terminus: NAD-dependent protein deacetylase (293 aa).

The region spanning 1–284 (MTVAITQTGP…QPPDPLHTAT (284 aa)) is the Deacetylase sirtuin-type domain. Residues 27–47 (GAGC…GGWK) and 105–108 (QNVD) each bind NAD(+). His-123 functions as the Proton acceptor in the catalytic mechanism. Residues Cys-131, Cys-134, Cys-182, and Cys-185 each coordinate Zn(2+). NAD(+) contacts are provided by residues 222–224 (GSS), 248–250 (NFG), and Cys-266.

This sequence belongs to the sirtuin family. Class II subfamily. It depends on Zn(2+) as a cofactor.

It is found in the cytoplasm. It catalyses the reaction N(6)-acetyl-L-lysyl-[protein] + NAD(+) + H2O = 2''-O-acetyl-ADP-D-ribose + nicotinamide + L-lysyl-[protein]. Its function is as follows. NAD-dependent protein deacetylase which modulates the activities of several enzymes which are inactive in their acetylated form. The sequence is that of NAD-dependent protein deacetylase from Xanthomonas campestris pv. campestris (strain 8004).